The primary structure comprises 430 residues: Adenylosuccinate synthetase (430 aa).

Residues 12–18 (GDEGKGK) and 40–42 (GHT) each bind GTP. Catalysis depends on aspartate 13, which acts as the Proton acceptor. The Mg(2+) site is built by aspartate 13 and glycine 40. IMP is bound by residues 13-16 (DEGK), 38-41 (NAGH), threonine 130, arginine 144, glutamine 224, threonine 239, and arginine 303. Residue histidine 41 is the Proton donor of the active site. A substrate-binding site is contributed by 299–305 (VNTGRKR). Residues arginine 305, 331–333 (KLD), and 413–415 (STS) contribute to the GTP site.

Belongs to the adenylosuccinate synthetase family. Homodimer. The cofactor is Mg(2+).

The protein resides in the cytoplasm. It catalyses the reaction IMP + L-aspartate + GTP = N(6)-(1,2-dicarboxyethyl)-AMP + GDP + phosphate + 2 H(+). The protein operates within purine metabolism; AMP biosynthesis via de novo pathway; AMP from IMP: step 1/2. Plays an important role in the de novo pathway of purine nucleotide biosynthesis. Catalyzes the first committed step in the biosynthesis of AMP from IMP. This Rhodopseudomonas palustris (strain ATCC BAA-98 / CGA009) protein is Adenylosuccinate synthetase.